A 537-amino-acid chain; its full sequence is MRILKLAALSCLLFIAPSLSINCDGLSKDQCEQNFPQCQILTAKSCCGESKSYCAERDSNDCLASKISCKKDPQGNIYEFWSSCTPSSGFTDFIPSNATCSSLNCNAQQMSCKYVQQACHETSCCPDIPQCQIPATGGGPATGSATGQGTSGGTPGSCDKVNCPNGYICTIVNQLAVCVSPSSSSSSSSSTTGSHTTTGGSTTGSHTTTGGSTTGSHTTTGGSTTGSHTTTGGSTTGSHTTTGGSTTGPTCGNVNCPRGYHCEVRGSQAVCVADEFDSCANVDCGSGYHCKNGECIRDKVECDACDQINCPKGHHCISQPKGGWIGSHKKRHWQLHPEHCGGRPNKIKVICVPSPKGTCKTVQCPKGYKCKLYADGPTCVKIEKPKCLTCKDMHCESNGLLCVLTPQKKTDEECCPIIPICINPSTIAASTIATTTASTRHSTASTIASLVTGTTSGGGGMGSFGGRSDEESSDPNAILGLFEDDIFWGDNDEYFSDNYRYVDEEDIDEDFNGNDEFEIDVEGDFQEDDFEEEYAFY.

Positions 1 to 20 are cleaved as a signal peptide; it reads MRILKLAALSCLLFIAPSLS. In terms of domain architecture, DSCP-N spans 21–140; sequence INCDGLSKDQ…CQIPATGGGP (120 aa). Asparagine 97 carries N-linked (GlcNAc...) asparagine glycosylation. Residues 157 to 179 enclose the Follistatin-like 1 domain; the sequence is SCDKVNCPNGYICTIVNQLAVCV. The disordered stretch occupies residues 183–246; the sequence is SSSSSSSSTT…GSHTTTGGST (64 aa). Follistatin-like domains follow at residues 250-272, 278-296, 358-380, and 389-415; these read TCGN…AVCV, SCAN…GECI, TCKT…PTCV, and TCKD…EECC.

Phosphorylated and fucosylated.

The chain is Spore coat protein SP70 (cotB) from Dictyostelium discoideum (Social amoeba).